The primary structure comprises 439 residues: Histone acetyltransferase GCN5 (439 aa).

Basic and acidic residues-rich tracts occupy residues 1–28 (MVTKHQIEEDHLDGATTDPEVKRVKLEN) and 39–59 (ETNKQEGTDKENKGKFEKETE). Residues 1 to 59 (MVTKHQIEEDHLDGATTDPEVKRVKLENNVEEIQPEQAETNKQEGTDKENKGKFEKETE) are disordered. In terms of domain architecture, N-acetyltransferase spans 100–255 (IEFRVVNNDN…GGTLMQCSML (156 aa)). The Proton donor/acceptor role is filled by Glu-173. Residues 177-179 (CAI), 184-190 (QVRGYGA), and 216-219 (YAIG) contribute to the acetyl-CoA site. The Bromo domain maps to 327–431 (PKRGPHDAAI…KFFNNKVKEI (105 aa)).

Belongs to the acetyltransferase family. GCN5 subfamily. Component of the 1.8 MDa SAGA (Spt-Ada-Gcn5 acetyltransferase) complex, which is composed of 19 subunits TRA1, SPT7, TAF5, NGG1/ADA3, SGF73, SPT20/ADA5, SPT8, TAF12, TAF6, HFI1/ADA1, UBP8, GCN5, ADA2, SPT3, SGF29, TAF10, TAF9, SGF11 and SUS1. The SAGA complex is composed of 4 modules, namely the HAT (histone acetyltransferase) module (GCN5, ADA2, NGG1/ADA3 and SGF29), the DUB (deubiquitinating) module (UBP8, SGF11, SGF73 and SUS1), the core or TAF (TBP-associated factor) module (TAF5, TAF6, TAF9, TAF10 and TAF12), and the Tra1 or SPT (Suppressor of Ty) module (TRA1, HFI1/ADA1, SPT3, SPT7, SPT8 and SPT20/ADA5). The Tra1/SPT module binds activators, the core module recruits TBP (TATA-binding protein), the HAT module contains the histone H3 acetyltransferase GCN5, and the DUB module comprises the histone H2B deubiquitinase UBP8. Also identified in an altered form of SAGA, named SALSA (SAGA altered, Spt8 absent) or SLIK (SAGA-like) complex, which contains a C-terminal truncated form of SPT7 and is missing SPT8. However, it has been shown that the SAGA and SAGA-like SALSA/SLIK transcriptional coactivators are structurally and biochemically equivalent. Component of the 0.8 MDa ADA complex, a HAT complex distinct from SAGA, which at least consists of ADA2, NGG1/ADA3, AHC1, AHC2, SGF29 and GCN5. Component of an ADA/GCN5 complex that consists of HFI1/ADA1, ADA2, NGG1/ADA3, SPT20/ADA5 and GCN5 and probably is a subcomplex of SAGA.

It localises to the nucleus. The protein resides in the cytoplasm. It carries out the reaction L-lysyl-[protein] + acetyl-CoA = N(6)-acetyl-L-lysyl-[protein] + CoA + H(+). The catalysed reaction is (2E)-butenoyl-CoA + L-lysyl-[protein] = N(6)-(2E)-butenoyl-L-lysyl-[protein] + CoA + H(+). Functionally, histone acetyltransferase that acetylates histone H2B to form H2BK11ac and H2BK16ac, histone H3 to form H3K9ac, H3K14ac, H3K18ac, H3K23ac, H3K27ac and H3K36ac, with a lower preference histone H4 to form H4K8ac and H4K16ac, and contributes to H2A.Z acetylation. Acetylation of histones gives a specific tag for epigenetic transcription activation and elongation. Operates in concert with certain DNA-binding transcriptional activators such as GCN4 or HAP2/3/4. Its acetyltransferase activity seems to be dependent on the association in different multisubunit complexes. Component of the transcription coactivator SAGA complex. SAGA acts as a general cofactor required for essentially all RNA polymerase II transcription. At the promoters, SAGA is required for transcription pre-initiation complex (PIC) recruitment. It influences RNA polymerase II transcriptional activity through different activities such as TBP interaction (via core/TAF module) and promoter selectivity, interaction with transcription activators (via Tra1/SPT module), and chromatin modification through histone acetylation (via HAT module) and deubiquitination (via DUB module). SAGA preferentially acetylates histones H3 (to form H3K9ac, H3K14ac, H3K18ac and H3K23ac) and H2B and deubiquitinates histone H2B. SAGA interacts with DNA via upstream activating sequences (UASs). Also identified in a modified version of SAGA named SALSA or SLIK. The cleavage of SPT7 and the absence of the SPT8 subunit in SLIK neither drive any major conformational differences in its structure compared with SAGA, nor significantly affect HAT, DUB, or DNA-binding activities. Component of the ADA histone acetyltransferase complex, which preferentially acetylates nucleosomal histones H3 (to form H3K14ac and H3K18ac) and H2B. In addition to histone acetyltransferase, can use different acyl-CoA substrates, such as (2E)-butenoyl-CoA (crotonyl-CoA) and is able to mediate histone crotonylation. Controls the metaphase-to-anaphase transition and is required for correct chromosome segregation and centromere/kinetochore function in mitosis. May be involved in response to DNA damage by genotoxic agents. This Saccharomyces cerevisiae (strain ATCC 204508 / S288c) (Baker's yeast) protein is Histone acetyltransferase GCN5.